A 552-amino-acid chain; its full sequence is Glucose-6-phosphate isomerase (552 aa).

Glutamate 357 serves as the catalytic Proton donor. Catalysis depends on residues histidine 388 and lysine 516. The tract at residues 525–552 is disordered; sequence ELASTKPPKHDSSTNALIERYRTRGCRS.

Belongs to the GPI family.

It localises to the cytoplasm. It carries out the reaction alpha-D-glucose 6-phosphate = beta-D-fructose 6-phosphate. It participates in carbohydrate biosynthesis; gluconeogenesis. Its pathway is carbohydrate degradation; glycolysis; D-glyceraldehyde 3-phosphate and glycerone phosphate from D-glucose: step 2/4. In terms of biological role, catalyzes the reversible isomerization of glucose-6-phosphate to fructose-6-phosphate. In Laribacter hongkongensis (strain HLHK9), this protein is Glucose-6-phosphate isomerase.